Reading from the N-terminus, the 321-residue chain is Methionyl-tRNA formyltransferase (321 aa).

112 to 115 (SILP) is a (6S)-5,6,7,8-tetrahydrofolate binding site.

It belongs to the Fmt family.

It catalyses the reaction L-methionyl-tRNA(fMet) + (6R)-10-formyltetrahydrofolate = N-formyl-L-methionyl-tRNA(fMet) + (6S)-5,6,7,8-tetrahydrofolate + H(+). Its function is as follows. Attaches a formyl group to the free amino group of methionyl-tRNA(fMet). The formyl group appears to play a dual role in the initiator identity of N-formylmethionyl-tRNA by promoting its recognition by IF2 and preventing the misappropriation of this tRNA by the elongation apparatus. This chain is Methionyl-tRNA formyltransferase, found in Shewanella piezotolerans (strain WP3 / JCM 13877).